The sequence spans 401 residues: Formate-dependent phosphoribosylglycinamide formyltransferase (401 aa).

Residues 22-23 (EL) and Glu82 each bind N(1)-(5-phospho-beta-D-ribosyl)glycinamide. ATP contacts are provided by residues Arg115, Lys157, 162-167 (SSGKGQ), 197-200 (EGFI), and Glu205. An ATP-grasp domain is found at 120 to 315 (RLAAESLGLP…EFELHARAIL (196 aa)). 2 residues coordinate Mg(2+): Glu274 and Glu286. N(1)-(5-phospho-beta-D-ribosyl)glycinamide is bound by residues Asp293, Lys362, and 369–370 (RR).

It belongs to the PurK/PurT family. As to quaternary structure, homodimer.

The enzyme catalyses N(1)-(5-phospho-beta-D-ribosyl)glycinamide + formate + ATP = N(2)-formyl-N(1)-(5-phospho-beta-D-ribosyl)glycinamide + ADP + phosphate + H(+). It participates in purine metabolism; IMP biosynthesis via de novo pathway; N(2)-formyl-N(1)-(5-phospho-D-ribosyl)glycinamide from N(1)-(5-phospho-D-ribosyl)glycinamide (formate route): step 1/1. Its function is as follows. Involved in the de novo purine biosynthesis. Catalyzes the transfer of formate to 5-phospho-ribosyl-glycinamide (GAR), producing 5-phospho-ribosyl-N-formylglycinamide (FGAR). Formate is provided by PurU via hydrolysis of 10-formyl-tetrahydrofolate. The chain is Formate-dependent phosphoribosylglycinamide formyltransferase from Cupriavidus necator (strain ATCC 17699 / DSM 428 / KCTC 22496 / NCIMB 10442 / H16 / Stanier 337) (Ralstonia eutropha).